A 297-amino-acid polypeptide reads, in one-letter code: ER membrane protein complex subunit 2 (297 aa).

An N-acetylalanine modification is found at A2. 3 TPR repeats span residues 87–120, 155–188, and 192–225; these read HRVK…DPTN, QEAW…NPYN, and CQQY…NNRN. At K255 the chain carries N6-acetyllysine.

It belongs to the EMC2 family. In terms of assembly, component of the ER membrane protein complex (EMC).

The protein localises to the endoplasmic reticulum membrane. In terms of biological role, part of the endoplasmic reticulum membrane protein complex (EMC) that enables the energy-independent insertion into endoplasmic reticulum membranes of newly synthesized membrane proteins. Preferentially accommodates proteins with transmembrane domains that are weakly hydrophobic or contain destabilizing features such as charged and aromatic residues. Involved in the cotranslational insertion of multi-pass membrane proteins in which stop-transfer membrane-anchor sequences become ER membrane spanning helices. It is also required for the post-translational insertion of tail-anchored/TA proteins in endoplasmic reticulum membranes. By mediating the proper cotranslational insertion of N-terminal transmembrane domains in an N-exo topology, with translocated N-terminus in the lumen of the ER, controls the topology of multi-pass membrane proteins like the G protein-coupled receptors. By regulating the insertion of various proteins in membranes, it is indirectly involved in many cellular processes. The polypeptide is ER membrane protein complex subunit 2 (Bos taurus (Bovine)).